Consider the following 515-residue polypeptide: 1-pyrroline-5-carboxylate dehydrogenase (515 aa).

Catalysis depends on residues E286 and C320.

This sequence belongs to the aldehyde dehydrogenase family. RocA subfamily.

The enzyme catalyses L-glutamate 5-semialdehyde + NAD(+) + H2O = L-glutamate + NADH + 2 H(+). The protein operates within amino-acid degradation; L-proline degradation into L-glutamate; L-glutamate from L-proline: step 2/2. This Bacillus cytotoxicus (strain DSM 22905 / CIP 110041 / 391-98 / NVH 391-98) protein is 1-pyrroline-5-carboxylate dehydrogenase.